The chain runs to 204 residues: Pro-glucagon (204 aa).

The N-terminal stretch at 1 to 20 (MTSMYFVAGLLLMIVQGSWQ) is a signal peptide. Positions 84 to 109 (SGQQGVEEREKENLLDQLSSNGLARH) are excised as a propeptide. The residue at position 145 (R145) is an Arginine amide. Propeptides lie at residues 149–161 (DFLEEAGTADDIG) and 197–204 (RDLLGEYQ).

It belongs to the glucagon family. As to expression, isoform LPII is expressed in both pancreas and intestine. Expression of isoform LPI is restricted to the pancreas. Neither isoform is detected in salivary glands.

It is found in the secreted. Plays a key role in glucose metabolism and homeostasis. Regulates blood glucose by increasing gluconeogenesis and decreasing glycolysis. Its function is as follows. Potent stimulator of glucose-dependent insulin release. Plays important roles on gastric motility and the suppression of plasma glucagon levels. In terms of biological role, stimulates intestinal growth and up-regulates villus height in the small intestine, concomitant with increased crypt cell proliferation and decreased enterocyte apoptosis. This chain is Pro-glucagon (GCG), found in Heloderma suspectum (Gila monster).